The following is a 241-amino-acid chain: 2-C-methyl-D-erythritol 4-phosphate cytidylyltransferase (241 aa).

The protein belongs to the IspD/TarI cytidylyltransferase family. IspD subfamily. In terms of assembly, homodimer.

It catalyses the reaction 2-C-methyl-D-erythritol 4-phosphate + CTP + H(+) = 4-CDP-2-C-methyl-D-erythritol + diphosphate. It participates in isoprenoid biosynthesis; isopentenyl diphosphate biosynthesis via DXP pathway; isopentenyl diphosphate from 1-deoxy-D-xylulose 5-phosphate: step 2/6. Functionally, catalyzes the formation of 4-diphosphocytidyl-2-C-methyl-D-erythritol from CTP and 2-C-methyl-D-erythritol 4-phosphate (MEP). This is 2-C-methyl-D-erythritol 4-phosphate cytidylyltransferase from Yersinia pestis.